We begin with the raw amino-acid sequence, 812 residues long: ATP-dependent DNA helicase PIF3 (812 aa).

247-254 is a binding site for ATP; the sequence is GSAGTGKT. Residues 741–761 mediate DNA binding; it reads HLVYVACSRVRSMDQLIVRNV.

The protein belongs to the helicase family. PIF1 subfamily. In terms of assembly, monomer. Requires Mg(2+) as cofactor.

Its subcellular location is the cytoplasm. It catalyses the reaction Couples ATP hydrolysis with the unwinding of duplex DNA at the replication fork by translocating in the 5'-3' direction. This creates two antiparallel DNA single strands (ssDNA). The leading ssDNA polymer is the template for DNA polymerase III holoenzyme which synthesizes a continuous strand.. It carries out the reaction ATP + H2O = ADP + phosphate + H(+). In terms of biological role, DNA-dependent ATPase and 5'-3' DNA helicase required for the maintenance of genome stability. In Trypanosoma brucei brucei (strain 927/4 GUTat10.1), this protein is ATP-dependent DNA helicase PIF3.